We begin with the raw amino-acid sequence, 180 residues long: UPF0340 protein YwlG (180 aa).

It belongs to the UPF0340 family.

The protein is UPF0340 protein YwlG (ywlG) of Bacillus subtilis (strain 168).